A 405-amino-acid polypeptide reads, in one-letter code: uncharacterized protein (405 aa).

Disordered regions lie at residues 1 to 21 (MSKKVNKNASPKNNSDSESKT), 150 to 179 (IKDESDSDSDDEDTKKKKKNTKNKGKQEGP), and 285 to 405 (DDED…KSRS). A compositionally biased stretch (polar residues) spans 7–16 (KNASPKNNSD). Composition is skewed to acidic residues over residues 312–331 (SDDEDSDNEKEKEKEEDDEE) and 349–358 (DDEDDEEEGE). Composition is skewed to basic residues over residues 365–374 (SSKKSSKKAS) and 390–405 (PKKKSSKAKSPSKSRS).

This is an uncharacterized protein from Acanthamoeba polyphaga (Amoeba).